Reading from the N-terminus, the 487-residue chain is Probable cytosol aminopeptidase (487 aa).

Positions 253 and 258 each coordinate Mn(2+). Lysine 265 is a catalytic residue. Mn(2+)-binding residues include aspartate 277, aspartate 337, and glutamate 339. Arginine 341 is an active-site residue.

This sequence belongs to the peptidase M17 family. It depends on Mn(2+) as a cofactor.

The protein localises to the cytoplasm. It carries out the reaction Release of an N-terminal amino acid, Xaa-|-Yaa-, in which Xaa is preferably Leu, but may be other amino acids including Pro although not Arg or Lys, and Yaa may be Pro. Amino acid amides and methyl esters are also readily hydrolyzed, but rates on arylamides are exceedingly low.. It catalyses the reaction Release of an N-terminal amino acid, preferentially leucine, but not glutamic or aspartic acids.. Presumably involved in the processing and regular turnover of intracellular proteins. Catalyzes the removal of unsubstituted N-terminal amino acids from various peptides. The chain is Probable cytosol aminopeptidase from Parasynechococcus marenigrum (strain WH8102).